The primary structure comprises 130 residues: MSCRLLLYVSLCLVETALMNTKITQSPRYLILGRANKSLECEQHLGHNAMYWYKQSAEKPPELMFLYNLKQLIRNETVPSRFIPECPDSSKLLLHISAVDPEDSAVYFCASSHGENTEVFFGKGTTLTVV.

A signal peptide spans 1–21 (MSCRLLLYVSLCLVETALMNT). Positions 22 to 112 (KITQSPRYLI…DSAVYFCASS (91 aa)) are v segment. Residues Asn-36 and Asn-75 are each glycosylated (N-linked (GlcNAc...) asparagine). Residues 113 to 115 (HGE) form a d segment region. The interval 116 to 130 (NTEVFFGKGTTLTVV) is j segment.

In Mus musculus (Mouse), this protein is T-cell receptor beta chain V region A20.2.25.